The sequence spans 208 residues: Ribosomal RNA small subunit methyltransferase G (208 aa).

Residues Gly-73, Leu-78, Val-124–Glu-125, and Arg-139 each bind S-adenosyl-L-methionine.

It belongs to the methyltransferase superfamily. RNA methyltransferase RsmG family.

The protein localises to the cytoplasm. It catalyses the reaction guanosine(527) in 16S rRNA + S-adenosyl-L-methionine = N(7)-methylguanosine(527) in 16S rRNA + S-adenosyl-L-homocysteine. Functionally, specifically methylates the N7 position of guanine in position 527 of 16S rRNA. This Aeromonas salmonicida (strain A449) protein is Ribosomal RNA small subunit methyltransferase G.